Here is a 176-residue protein sequence, read N- to C-terminus: Tubulin polymerization-promoting protein family member 3 (176 aa).

Positions 132-151 (TGSHKERFDQTGKGKGKSGR) are disordered. Residues 134-151 (SHKERFDQTGKGKGKSGR) show a composition bias toward basic and acidic residues.

This sequence belongs to the TPPP family.

It is found in the cytoplasm. Its subcellular location is the cytoskeleton. Regulator of microtubule dynamic that has microtubule bundling activity. The chain is Tubulin polymerization-promoting protein family member 3 (tppp3) from Xenopus laevis (African clawed frog).